The following is a 324-amino-acid chain: 4-hydroxyphenylpyruvate 3-dimethylallyltransferase (324 aa).

Residues R160 and E281 each contribute to the substrate site.

Belongs to the aromatic prenyltransferase family. Monomer.

The catalysed reaction is 3-(4-hydroxyphenyl)pyruvate + dimethylallyl diphosphate = 3-dimethylallyl-4-hydroxyphenylpyruvate + diphosphate. Its pathway is antibiotic biosynthesis. Magnesium-independent aromatic prenyltransferase that catalyzes the irreversible transfer of a dimethylallyl group to 4-hydroxyphenylpyruvate to produce the ring A structure in the clorobiocin biosynthesis pathway. Clorobiocin is an aminocoumarin family antibiotic. This is 4-hydroxyphenylpyruvate 3-dimethylallyltransferase from Streptomyces roseochromogenus subsp. oscitans.